The sequence spans 140 residues: Putative ABC transporter permease protein ORF1 (140 aa).

In terms of domain architecture, ABC transmembrane type-1 spans Asp1 to Phe133. The next 3 membrane-spanning stretches (helical) occupy residues Val9–Leu29, Thr65–Thr85, and Thr115–Thr135.

It belongs to the binding-protein-dependent transport system permease family. MalFG subfamily.

Its subcellular location is the cell membrane. Functionally, may play a role in sugar transport. The polypeptide is Putative ABC transporter permease protein ORF1 (Caldicellulosiruptor sp. (strain Rt8B.4)).